A 215-amino-acid polypeptide reads, in one-letter code: Probable phosphoglycerate mutase GpmB (215 aa).

Substrate-binding positions include 8 to 15 (RHGESEWN), 21 to 22 (QG), R58, R60, 82 to 85 (ELHM), and 151 to 152 (GI). The active-site Tele-phosphohistidine intermediate is H9. Residue E82 is the Proton donor/acceptor of the active site.

It belongs to the phosphoglycerate mutase family. GpmB subfamily.

The enzyme catalyses (2R)-2-phosphoglycerate = (2R)-3-phosphoglycerate. The protein operates within carbohydrate degradation; glycolysis; pyruvate from D-glyceraldehyde 3-phosphate: step 3/5. The protein is Probable phosphoglycerate mutase GpmB of Photorhabdus laumondii subsp. laumondii (strain DSM 15139 / CIP 105565 / TT01) (Photorhabdus luminescens subsp. laumondii).